The following is a 1038-amino-acid chain: MFEEVLQESFDEREKKVLKFWQEGQLFERSVENRKGQPLFTFYDGPPFATGLPHYGHILAGTIKDVVLRYKTMKGFCAPRRFGWDCHGLPVENEIEKTFGLSGAKSIEEFGIAKFNEECRNIVLRYTEEWKFTVNRMGRWVDFNQTYRTMDLPFMESVWWVFKQLYAKGLVYEGLKVMPFSAKLGTPLSNFEASENYKEVDDPSLTVAFQSRDNSNTYFLAWTTTPWTLVSNLALMVSPMIEYAEVQDHVSKRNYILATERLKGYYKDSGEYTIVRKFPGSELEGQHYIPLFDYFNDRAHSGAFKIILEDSISVEEGTGIVQTAPAFGEIDFYACQKAGIDPVCPVDNNGQFTDEIPEYKGIFVKEADKDIIKRLKQQAKVIHQGTCHHRYPFCPRSDTPLIYKTVRTWFVAVEKIKDRLLAANSQIHWTPEHIQYGRFGKWLEGARDWAISRNRYWGTPIPLWRAQDGEIHVVGSIEELKQLTGNPLTDLHRHFIDEMSFEKNGKTFKRIPEVFDCWFESGSMPYAQNHYPFENRELFEQNFPADFIAEGLDQTRGWFYTLTVLSAALFDQPAMKNVIVNGLILAENGAKMSKRLKNYPDPAEVIQQYGADAIRLYMLHSPAVKADDLSFSKSGVELVLRQILLPLWNAYTFFLTYARIYNWKPGKLVQKPELAIDQWIISLLNKLVHEVEQGMDDYDLSRSVEPFVNFVDQLTNWYIRRSRRRFWDDKESPNRTQAFETLYYVLIELTKISAPYVPFISEAIYQNLRSCDMPESVHLCDFPHYQQLSRHEKLEAEMEAVQVTVSLGHALRKEHKLKVRQPLATAQLASADPKVLDFLKEQQHLISEELNVKEITFSSNEKDFVSLKAKPNFRVLGKKVGKLMKLAQLTIEQFGQKELTELLNHRSVEIILEGHPVLLTSEDVQVERIVREGIIAANQGTITIALNTNLNKELLLEGLAREIVNKVNTMRREANFAVTDRIQLYMQTTTRVIECFDQYKNYICQEVLATDVQFGPYEGTDWDLNGEPTKIIIKKSEY.

Residues 47 to 57 (PFATGLPHYGH) carry the 'HIGH' region motif. Residues 591-595 (KMSKR) carry the 'KMSKS' region motif. Lysine 594 serves as a coordination point for ATP.

Belongs to the class-I aminoacyl-tRNA synthetase family. IleS type 2 subfamily. As to quaternary structure, monomer. The cofactor is Zn(2+).

The protein resides in the cytoplasm. It catalyses the reaction tRNA(Ile) + L-isoleucine + ATP = L-isoleucyl-tRNA(Ile) + AMP + diphosphate. Its function is as follows. Catalyzes the attachment of isoleucine to tRNA(Ile). As IleRS can inadvertently accommodate and process structurally similar amino acids such as valine, to avoid such errors it has two additional distinct tRNA(Ile)-dependent editing activities. One activity is designated as 'pretransfer' editing and involves the hydrolysis of activated Val-AMP. The other activity is designated 'posttransfer' editing and involves deacylation of mischarged Val-tRNA(Ile). The chain is Isoleucine--tRNA ligase from Protochlamydia amoebophila (strain UWE25).